A 419-amino-acid polypeptide reads, in one-letter code: UDP-N-acetylglucosamine 1-carboxyvinyltransferase (419 aa).

Position 22–23 (22–23 (KN)) interacts with phosphoenolpyruvate. A UDP-N-acetyl-alpha-D-glucosamine-binding site is contributed by Arg-92. The active-site Proton donor is the Cys-116. Cys-116 carries the post-translational modification 2-(S-cysteinyl)pyruvic acid O-phosphothioketal. UDP-N-acetyl-alpha-D-glucosamine is bound by residues 121 to 125 (RPVDQ), Asp-306, and Ile-328.

Belongs to the EPSP synthase family. MurA subfamily.

It localises to the cytoplasm. The enzyme catalyses phosphoenolpyruvate + UDP-N-acetyl-alpha-D-glucosamine = UDP-N-acetyl-3-O-(1-carboxyvinyl)-alpha-D-glucosamine + phosphate. It functions in the pathway cell wall biogenesis; peptidoglycan biosynthesis. Its function is as follows. Cell wall formation. Adds enolpyruvyl to UDP-N-acetylglucosamine. Target for the antibiotic phosphomycin. The polypeptide is UDP-N-acetylglucosamine 1-carboxyvinyltransferase (Acinetobacter guillouiae (Acinetobacter genomosp. 11)).